Consider the following 172-residue polypeptide: MSKDFIINEQIRAREVRLIDQNGDQLGIKSKQEALEIAARRNLDLVLVAPNAKPPVCRIMDYGKFRFEQQKKEKEARKKQKVINVKEVRLSPTIEEHDFNTKLRNARKFLEKGDKVKATIRFKGRAITHKEIGQRVLDRLSEACADIAVVETAPKMDGRNMFLVLAPKNDNK.

Belongs to the IF-3 family. In terms of assembly, monomer.

It localises to the cytoplasm. In terms of biological role, IF-3 binds to the 30S ribosomal subunit and shifts the equilibrium between 70S ribosomes and their 50S and 30S subunits in favor of the free subunits, thus enhancing the availability of 30S subunits on which protein synthesis initiation begins. This Geobacillus stearothermophilus (Bacillus stearothermophilus) protein is Translation initiation factor IF-3.